The primary structure comprises 237 residues: (5-formylfuran-3-yl)methyl phosphate synthase (237 aa).

K27 serves as the catalytic Schiff-base intermediate with substrate. The Proton acceptor role is filled by K85.

It belongs to the MfnB family.

The enzyme catalyses 2 D-glyceraldehyde 3-phosphate = 4-(hydroxymethyl)-2-furancarboxaldehyde phosphate + phosphate + 2 H2O. It functions in the pathway cofactor biosynthesis; methanofuran biosynthesis. Catalyzes the formation of 4-(hydroxymethyl)-2-furancarboxaldehyde phosphate (4-HFC-P) from two molecules of glyceraldehyde-3-P (GA-3-P). The polypeptide is (5-formylfuran-3-yl)methyl phosphate synthase (Methanobrevibacter smithii (strain ATCC 35061 / DSM 861 / OCM 144 / PS)).